A 177-amino-acid polypeptide reads, in one-letter code: Embryogenesis-like protein (177 aa).

Residues 98-118 adopt a coiled-coil conformation; it reads VDEINLKFAEAREEIEMAMDA.

Interacts with HAG1/GCN5. Expressed in flowers, leaves, stems and siliques.

The protein localises to the nucleus. Its function is as follows. Activates gene expression by recruiting HAG1/GCN5 and triggering subsequent histone H3 acetylation of target genes promoters. The polypeptide is Embryogenesis-like protein (Arabidopsis thaliana (Mouse-ear cress)).